The primary structure comprises 580 residues: Glutamine--tRNA ligase (580 aa).

The 'HIGH' region signature appears at 41–51; it reads PEPNGYLHIGH. Residues 42–44 and 48–54 each bind ATP; these read EPN and HIGHAKA. 2 residues coordinate L-glutamine: D74 and Y218. ATP is bound by residues T237, 285–286, and 293–295; these read RL and MSK. The 'KMSKS' region signature appears at 292–296; sequence VMSKR.

It belongs to the class-I aminoacyl-tRNA synthetase family. As to quaternary structure, monomer.

The protein localises to the cytoplasm. The catalysed reaction is tRNA(Gln) + L-glutamine + ATP = L-glutaminyl-tRNA(Gln) + AMP + diphosphate. In Xylella fastidiosa (strain Temecula1 / ATCC 700964), this protein is Glutamine--tRNA ligase.